A 507-amino-acid polypeptide reads, in one-letter code: ATP synthase subunit alpha, plastid (507 aa).

Residue 170–177 participates in ATP binding; that stretch reads GDRQTGKT.

The protein belongs to the ATPase alpha/beta chains family. In terms of assembly, F-type ATPases have 2 components, CF(1) - the catalytic core - and CF(0) - the membrane proton channel. CF(1) has five subunits: alpha(3), beta(3), gamma(1), delta(1), epsilon(1). CF(0) has four main subunits: a, b, b' and c.

Its subcellular location is the plastid membrane. The enzyme catalyses ATP + H2O + 4 H(+)(in) = ADP + phosphate + 5 H(+)(out). Produces ATP from ADP in the presence of a proton gradient across the membrane. The alpha chain is a regulatory subunit. This Cuscuta obtusiflora (Peruvian dodder) protein is ATP synthase subunit alpha, plastid.